We begin with the raw amino-acid sequence, 241 residues long: DNA repair protein RecO (241 aa).

The protein belongs to the RecO family.

In terms of biological role, involved in DNA repair and RecF pathway recombination. The chain is DNA repair protein RecO from Yersinia enterocolitica serotype O:8 / biotype 1B (strain NCTC 13174 / 8081).